A 37-amino-acid chain; its full sequence is Cytochrome b6-f complex subunit 5 (37 aa).

Residues 5 to 25 (FLFGIVLGLIPITLAGLFVTA) form a helical membrane-spanning segment.

Belongs to the PetG family. As to quaternary structure, the 4 large subunits of the cytochrome b6-f complex are cytochrome b6, subunit IV (17 kDa polypeptide, PetD), cytochrome f and the Rieske protein, while the 4 small subunits are PetG, PetL, PetM and PetN. The complex functions as a dimer.

The protein localises to the plastid. It localises to the chloroplast thylakoid membrane. Component of the cytochrome b6-f complex, which mediates electron transfer between photosystem II (PSII) and photosystem I (PSI), cyclic electron flow around PSI, and state transitions. PetG is required for either the stability or assembly of the cytochrome b6-f complex. The protein is Cytochrome b6-f complex subunit 5 of Platanus occidentalis (Sycamore).